Here is a 274-residue protein sequence, read N- to C-terminus: HTH-type transcriptional regulator GadX (274 aa).

Residues 145–242 (TRVCTVINNN…GMTPTEYQER (98 aa)) form the HTH araC/xylS-type domain. 2 DNA-binding regions (H-T-H motif) span residues 162–183 (ARIA…REEE) and 209–232 (IKRV…RNYY).

In terms of assembly, homodimer.

In terms of biological role, positively regulates the expression of about fifteen genes involved in acid resistance such as gadA, gadB and gadC. Depending on the conditions (growth phase and medium), can repress gadW. The polypeptide is HTH-type transcriptional regulator GadX (gadX) (Shigella flexneri).